The chain runs to 357 residues: GPI mannosyltransferase 2 (357 aa).

Helical transmembrane passes span 6-26, 86-106, 128-148, 167-187, 201-221, 257-277, 286-306, and 334-354; these read TLIV…LVVP, AIAY…ALML, ILSP…FALL, VLGA…PFLF, GVSV…TQYL, YWTA…YLMY, LVPF…MWHV, and YVVR…GAYL.

This sequence belongs to the PIGV family.

It is found in the endoplasmic reticulum membrane. It functions in the pathway glycolipid biosynthesis; glycosylphosphatidylinositol-anchor biosynthesis. Mannosyltransferase involved in glycosylphosphatidylinositol-anchor biosynthesis. Transfers the second mannose to the glycosylphosphatidylinositol during GPI precursor assembly. The sequence is that of GPI mannosyltransferase 2 (GPI18) from Yarrowia lipolytica (strain CLIB 122 / E 150) (Yeast).